Here is a 171-residue protein sequence, read N- to C-terminus: Transcription factor E (171 aa).

Residues tyrosine 5–glutamate 88 enclose the HTH TFE/IIEalpha-type domain.

This sequence belongs to the TFE family. In terms of assembly, monomer. Interaction with RNA polymerase subunits RpoF and RpoE is necessary for Tfe stimulatory transcription activity. Able to interact with Tbp and RNA polymerase in the absence of DNA promoter. Interacts both with the preinitiation and elongation complexes.

Transcription factor that plays a role in the activation of archaeal genes transcribed by RNA polymerase. Facilitates transcription initiation by enhancing TATA-box recognition by TATA-box-binding protein (Tbp), and transcription factor B (Tfb) and RNA polymerase recruitment. Not absolutely required for transcription in vitro, but particularly important in cases where Tbp or Tfb function is not optimal. It dynamically alters the nucleic acid-binding properties of RNA polymerases by stabilizing the initiation complex and destabilizing elongation complexes. Seems to translocate with the RNA polymerase following initiation and acts by binding to the non template strand of the transcription bubble in elongation complexes. This chain is Transcription factor E, found in Cenarchaeum symbiosum (strain A).